Reading from the N-terminus, the 369-residue chain is Queuine tRNA-ribosyltransferase accessory subunit 2 (369 aa).

Residues 263-282 (SSKLTEVEEENGNDSSNDQD) are disordered. The Zn(2+) site is built by Cys308, Cys310, Cys313, and His339.

Belongs to the queuine tRNA-ribosyltransferase family. QTRT2 subfamily. As to quaternary structure, heterodimer of a catalytic subunit and an accessory subunit. It depends on Zn(2+) as a cofactor.

Its subcellular location is the cytoplasm. Functionally, non-catalytic subunit of the queuine tRNA-ribosyltransferase (TGT) that catalyzes the base-exchange of a guanine (G) residue with queuine (Q) at position 34 (anticodon wobble position) in tRNAs with GU(N) anticodons (tRNA-Asp, -Asn, -His and -Tyr), resulting in the hypermodified nucleoside queuosine (7-(((4,5-cis-dihydroxy-2-cyclopenten-1-yl)amino)methyl)-7-deazaguanosine). In Trichoplax adhaerens (Trichoplax reptans), this protein is Queuine tRNA-ribosyltransferase accessory subunit 2.